Consider the following 292-residue polypeptide: 4-hydroxy-tetrahydrodipicolinate synthase (292 aa).

Pyruvate is bound at residue Thr45. The active-site Proton donor/acceptor is the Tyr133. Lys161 functions as the Schiff-base intermediate with substrate in the catalytic mechanism. Ile203 is a pyruvate binding site.

It belongs to the DapA family. As to quaternary structure, homodimer.

It localises to the cytoplasm. It catalyses the reaction L-aspartate 4-semialdehyde + pyruvate = (2S,4S)-4-hydroxy-2,3,4,5-tetrahydrodipicolinate + H2O + H(+). It participates in amino-acid biosynthesis; L-lysine biosynthesis via DAP pathway; (S)-tetrahydrodipicolinate from L-aspartate: step 3/4. Catalyzes the condensation of (S)-aspartate-beta-semialdehyde [(S)-ASA] and pyruvate to 4-hydroxy-tetrahydrodipicolinate (HTPA). The sequence is that of 4-hydroxy-tetrahydrodipicolinate synthase from Pseudomonas aeruginosa (strain ATCC 15692 / DSM 22644 / CIP 104116 / JCM 14847 / LMG 12228 / 1C / PRS 101 / PAO1).